A 196-amino-acid chain; its full sequence is ATP-dependent Clp protease proteolytic subunit (196 aa).

Ser-97 (nucleophile) is an active-site residue. The active site involves His-122.

It belongs to the peptidase S14 family. Fourteen ClpP subunits assemble into 2 heptameric rings which stack back to back to give a disk-like structure with a central cavity, resembling the structure of eukaryotic proteasomes.

It is found in the cytoplasm. The enzyme catalyses Hydrolysis of proteins to small peptides in the presence of ATP and magnesium. alpha-casein is the usual test substrate. In the absence of ATP, only oligopeptides shorter than five residues are hydrolyzed (such as succinyl-Leu-Tyr-|-NHMec, and Leu-Tyr-Leu-|-Tyr-Trp, in which cleavage of the -Tyr-|-Leu- and -Tyr-|-Trp bonds also occurs).. In terms of biological role, cleaves peptides in various proteins in a process that requires ATP hydrolysis. Has a chymotrypsin-like activity. Plays a major role in the degradation of misfolded proteins. This Lacticaseibacillus paracasei (strain ATCC 334 / BCRC 17002 / CCUG 31169 / CIP 107868 / KCTC 3260 / NRRL B-441) (Lactobacillus paracasei) protein is ATP-dependent Clp protease proteolytic subunit.